We begin with the raw amino-acid sequence, 152 residues long: Xanthine-guanine phosphoribosyltransferase (152 aa).

5-phospho-alpha-D-ribose 1-diphosphate contacts are provided by residues 37 to 38 (RG), Arg69, and 88 to 96 (DDLVDTGGT). Arg69 is a binding site for GMP. Asp89 is a Mg(2+) binding site. Positions 92 and 135 each coordinate guanine. Positions 92 and 135 each coordinate xanthine. GMP-binding positions include 92–96 (DTGGT) and 134–135 (WI).

It belongs to the purine/pyrimidine phosphoribosyltransferase family. XGPT subfamily. In terms of assembly, homotetramer. The cofactor is Mg(2+).

The protein localises to the cell inner membrane. The catalysed reaction is GMP + diphosphate = guanine + 5-phospho-alpha-D-ribose 1-diphosphate. It catalyses the reaction XMP + diphosphate = xanthine + 5-phospho-alpha-D-ribose 1-diphosphate. It carries out the reaction IMP + diphosphate = hypoxanthine + 5-phospho-alpha-D-ribose 1-diphosphate. It functions in the pathway purine metabolism; GMP biosynthesis via salvage pathway; GMP from guanine: step 1/1. The protein operates within purine metabolism; XMP biosynthesis via salvage pathway; XMP from xanthine: step 1/1. In terms of biological role, purine salvage pathway enzyme that catalyzes the transfer of the ribosyl-5-phosphate group from 5-phospho-alpha-D-ribose 1-diphosphate (PRPP) to the N9 position of the 6-oxopurines guanine and xanthine to form the corresponding ribonucleotides GMP (guanosine 5'-monophosphate) and XMP (xanthosine 5'-monophosphate), with the release of PPi. To a lesser extent, also acts on hypoxanthine. This Yersinia pseudotuberculosis serotype O:1b (strain IP 31758) protein is Xanthine-guanine phosphoribosyltransferase.